The sequence spans 75 residues: MSSGGLLLLLGLLTLWAELTPVSSLDRPKKPGLCPPRPQKPPCVRECKNDWRCPGERKCCRYGCIYECRDPIFVK.

Positions 1–24 (MSSGGLLLLLGLLTLWAELTPVSS) are cleaved as a signal peptide. Residues 27 to 72 (RPKKPGLCPPRPQKPPCVRECKNDWRCPGERKCCRYGCIYECRDPI) enclose the WAP domain. 4 disulfides stabilise this stretch: Cys34–Cys60, Cys43–Cys64, Cys47–Cys59, and Cys53–Cys68.

This sequence belongs to the venom waprin family. As to expression, expressed by the venom gland.

It localises to the secreted. Functionally, damages membranes of susceptible bacteria. Has no hemolytic activity. Not toxic to mice. Does not inhibit the proteinases elastase and cathepsin G. This chain is Veswaprin-c, found in Demansia vestigiata (Lesser black whip snake).